The following is a 647-amino-acid chain: C2H2 finger domain transcription factor USV101 (647 aa).

Positions 1-10 are enriched in basic and acidic residues; that stretch reads MSFVAPDDRA. Residues 1–132 form a disordered region; the sequence is MSFVAPDDRA…ATGYTPDGQP (132 aa). Composition is skewed to polar residues over residues 27-54 and 66-84; these read ESTS…SPNQ and SSHS…STAY. Low complexity predominate over residues 97-122; it reads PTQQQQQQQSEQHIPSPPSSSNRPPS. 2 consecutive C2H2-type zinc fingers follow at residues 144-169 and 175-197; these read FRCR…VRKH and FPCH…ATVH. The interval 220-647 is disordered; the sequence is QRASREQRRR…VKQQDDKKTQ (428 aa). Over residues 222–248 the composition is skewed to basic and acidic residues; that stretch reads ASREQRRRGEVVEVPKGAVERRRETRK. Low complexity predominate over residues 249-259; the sequence is AQAAAAQAAAA. Residues 261 to 278 are compositionally biased toward polar residues; it reads GHSQQNSPYAQYHESQWN. 3 stretches are compositionally biased toward low complexity: residues 312-327, 404-414, and 421-434; these read SSSA…YDSA, HGAYPPHDAAA, and GYYH…GSYP. The segment covering 504-515 has biased composition (basic and acidic residues); sequence RAEDDFGKDDRK. Low complexity predominate over residues 521–540; the sequence is SPSNSQVPDSSTAAHANGAH. A compositionally biased stretch (basic and acidic residues) spans 628–647; that stretch reads VDKEREKKEEVKQQDDKKTQ.

It localises to the nucleus. It is found in the cytoplasm. Functionally, transcription factor that promotes pheromone gene expression, which results in a subsequent increase in cell fusion. Also promotes production of melanin and capsule and thereby is required for full virulence. The sequence is that of C2H2 finger domain transcription factor USV101 from Cryptococcus neoformans var. grubii serotype A (strain H99 / ATCC 208821 / CBS 10515 / FGSC 9487) (Filobasidiella neoformans var. grubii).